The primary structure comprises 188 residues: Elongation factor P-like protein (188 aa).

Belongs to the elongation factor P family.

The sequence is that of Elongation factor P-like protein from Saccharophagus degradans (strain 2-40 / ATCC 43961 / DSM 17024).